We begin with the raw amino-acid sequence, 236 residues long: MQILTWALAALAAIPAVTAAPVETVEASSMDELVERSPNVTLVARGTPSSTGTHNGFYYSHWTDNAGADVTYSMGGGGQFSYTWRNSGNFVGGKGWNPGNAGRVINYSGSYSPQGNSYLAVYGWTRNPLIEYYVVESFGSYNPSSGATNRGSFTSDGSTYDILVSTRYNQPSIDGTKTFQQFWSVRRNKRASGTVTFANHVNAWRNAGLNLGNQWNYQILAVEGYHSSGSASMTVR.

An N-terminal signal peptide occupies residues 1–45 (MQILTWALAALAAIPAVTAAPVETVEASSMDELVERSPNVTLVAR). N-linked (GlcNAc...) asparagine glycosylation is found at asparagine 39 and asparagine 106. In terms of domain architecture, GH11 spans 46 to 236 (GTPSSTGTHN…SSGSASMTVR (191 aa)). The active-site Nucleophile is glutamate 131. Glutamate 223 serves as the catalytic Proton donor.

This sequence belongs to the glycosyl hydrolase 11 (cellulase G) family.

It localises to the secreted. The catalysed reaction is Endohydrolysis of (1-&gt;4)-beta-D-xylosidic linkages in xylans.. It participates in glycan degradation; xylan degradation. Its function is as follows. Endo-1,4-beta-xylanase involved in the hydrolysis of xylan, a major structural heterogeneous polysaccharide found in plant biomass representing the second most abundant polysaccharide in the biosphere, after cellulose. The protein is Endo-1,4-beta-xylanase 3 (XYL3) of Pyricularia grisea (Crabgrass-specific blast fungus).